The following is a 247-amino-acid chain: Probable transcriptional regulatory protein Hhal_2210 (247 aa).

Belongs to the TACO1 family.

The protein localises to the cytoplasm. This chain is Probable transcriptional regulatory protein Hhal_2210, found in Halorhodospira halophila (strain DSM 244 / SL1) (Ectothiorhodospira halophila (strain DSM 244 / SL1)).